We begin with the raw amino-acid sequence, 399 residues long: Leu/Ile/Val-binding protein homolog 7 (399 aa).

Positions 1–22 are cleaved as a signal peptide; it reads MEKHLIALSVAALLAGAAPASA.

This sequence belongs to the leucine-binding protein family.

Component of an amino-acid transport system. This Brucella suis biovar 1 (strain 1330) protein is Leu/Ile/Val-binding protein homolog 7.